A 319-amino-acid polypeptide reads, in one-letter code: Glutathione synthetase (319 aa).

One can recognise an ATP-grasp domain in the interval 125 to 311 (KLFTAWFPEL…ITGMLMDAIE (187 aa)). 151-207 (HQEHGDIILKPLDGMGGTSIFRVKQDDPNLSVIIETLTELSSRFCMAQNFLPAIKEG) is a binding site for ATP. Mg(2+)-binding residues include Glu-281 and Asn-283.

Belongs to the prokaryotic GSH synthase family. Mg(2+) is required as a cofactor. Requires Mn(2+) as cofactor.

The catalysed reaction is gamma-L-glutamyl-L-cysteine + glycine + ATP = glutathione + ADP + phosphate + H(+). It participates in sulfur metabolism; glutathione biosynthesis; glutathione from L-cysteine and L-glutamate: step 2/2. The protein is Glutathione synthetase of Yersinia pestis.